Reading from the N-terminus, the 441-residue chain is MATHKTLLMCLGLPLFFPGALAQNHAPPGCSPDLDPLYYNLCDRSGAWGIVLEAVAGAGIITTFVLTIILVASLPFVQDTKKRSLLGTQVFFLLGTLGLFCLVFACVVKPDFSTCASRRFLFGVLFAICFSCLIAHTLSLNFLARKNHGPRGWVIFTVALLLTLVEVIINTEWLIITLVRGGGQVSTPGNGSADWTVTSPCAIANMDFVMALIYVMLLLLAAFLGAWPTLCGRFKRWRKHGVFVLLTTATSIAIWVVWIVMYTYGNKQHHSPTWDDPTLAIALAANAWTFVFFYVIPEVSQVTKPSPEQSYQGDMYPTRGVGYETILKEQTGQSMFVENKAFSMDEPASAKRPVSPYSGYNGQLLTSVYQPTEMALMHKGPSEGAYDVILPRATANSQVMGSANSTLRAEDMYMVQSHQVATPTKDGKISQDQSPKNKTRW.

Positions 1–22 are cleaved as a signal peptide; the sequence is MATHKTLLMCLGLPLFFPGALA. Over 23 to 49 the chain is Extracellular; it reads QNHAPPGCSPDLDPLYYNLCDRSGAWG. Residues 50 to 70 traverse the membrane as a helical segment; the sequence is IVLEAVAGAGIITTFVLTIIL. At 71 to 84 the chain is on the cytoplasmic side; the sequence is VASLPFVQDTKKRS. Residues 85–105 traverse the membrane as a helical segment; that stretch reads LLGTQVFFLLGTLGLFCLVFA. Residues 106–119 lie on the Extracellular side of the membrane; sequence CVVKPDFSTCASRR. A helical membrane pass occupies residues 120 to 140; the sequence is FLFGVLFAICFSCLIAHTLSL. Over 141–154 the chain is Cytoplasmic; it reads NFLARKNHGPRGWV. The chain crosses the membrane as a helical span at residues 155–175; that stretch reads IFTVALLLTLVEVIINTEWLI. The Extracellular segment spans residues 176–207; it reads ITLVRGGGQVSTPGNGSADWTVTSPCAIANMD. Asn190 carries N-linked (GlcNAc...) asparagine glycosylation. The helical transmembrane segment at 208-228 threads the bilayer; the sequence is FVMALIYVMLLLLAAFLGAWP. Residues 229 to 240 are Cytoplasmic-facing; sequence TLCGRFKRWRKH. The helical transmembrane segment at 241 to 261 threads the bilayer; the sequence is GVFVLLTTATSIAIWVVWIVM. The Extracellular segment spans residues 262 to 278; that stretch reads YTYGNKQHHSPTWDDPT. The helical transmembrane segment at 279–299 threads the bilayer; that stretch reads LAIALAANAWTFVFFYVIPEV. Topologically, residues 300–441 are cytoplasmic; it reads SQVTKPSPEQ…DQSPKNKTRW (142 aa). Phosphoserine occurs at positions 343, 382, 402, and 405. Tyr413 bears the Phosphotyrosine mark. The interval 419 to 441 is disordered; it reads QVATPTKDGKISQDQSPKNKTRW. A Phosphothreonine modification is found at Thr422. Residues 430-441 show a composition bias toward polar residues; sequence SQDQSPKNKTRW. Ser434 carries the post-translational modification Phosphoserine.

Belongs to the G-protein coupled receptor 3 family.

Its subcellular location is the cell membrane. Its function is as follows. This retinoic acid-inducible G-protein coupled receptor provide evidence for a possible interaction between retinoid and G-protein signaling pathways. This is G-protein coupled receptor family C group 5 member C (Gprc5c) from Rattus norvegicus (Rat).